The following is a 293-amino-acid chain: Ribosomal protein L11 methyltransferase (293 aa).

S-adenosyl-L-methionine contacts are provided by threonine 145, glycine 166, aspartate 188, and asparagine 230.

It belongs to the methyltransferase superfamily. PrmA family.

The protein resides in the cytoplasm. It catalyses the reaction L-lysyl-[protein] + 3 S-adenosyl-L-methionine = N(6),N(6),N(6)-trimethyl-L-lysyl-[protein] + 3 S-adenosyl-L-homocysteine + 3 H(+). Its function is as follows. Methylates ribosomal protein L11. The polypeptide is Ribosomal protein L11 methyltransferase (Mannheimia succiniciproducens (strain KCTC 0769BP / MBEL55E)).